We begin with the raw amino-acid sequence, 488 residues long: Probable malate:quinone oxidoreductase (488 aa).

This sequence belongs to the MQO family. It depends on FAD as a cofactor.

The catalysed reaction is (S)-malate + a quinone = a quinol + oxaloacetate. It functions in the pathway carbohydrate metabolism; tricarboxylic acid cycle; oxaloacetate from (S)-malate (quinone route): step 1/1. The protein is Probable malate:quinone oxidoreductase of Neisseria meningitidis serogroup C / serotype 2a (strain ATCC 700532 / DSM 15464 / FAM18).